Consider the following 599-residue polypeptide: Matrix metallopeptidase-21 (599 aa).

An N-terminal signal peptide occupies residues 1 to 20 (MLTVIRRIFIIQTFIFITAE). The propeptide occupies 21–170 (KIFHSRDHSD…NHEHQAPVRK (150 aa)). Cys130 is a Zn(2+) binding site. The segment at 141–170 (DVTGSNSTRNHIRTSTNTSHNHEHQAPVRK) is disordered. Residues 143-159 (TGSNSTRNHIRTSTNTS) are compositionally biased toward polar residues. His309 contacts Zn(2+). Residue Glu310 is part of the active site. Positions 313 and 319 each coordinate Zn(2+). Cys355 and Cys586 are joined by a disulfide. Hemopexin repeat units follow at residues 356 to 415 (TGRF…WHGL), 417 to 473 (SGGV…FPGV), 474 to 522 (SGPL…FPAI), and 529 to 585 (VRSL…WFDI). N-linked (GlcNAc...) asparagine glycosylation occurs at Asn398.

It belongs to the peptidase M10A family. In terms of processing, the precursor is cleaved by a furin endopeptidase.

Functionally, plays a specialized role in the generation of left-right asymmetry during embryogenesis. May act as a negative regulator of the NOTCH-signaling pathway. The chain is Matrix metallopeptidase-21 from Danio rerio (Zebrafish).